Consider the following 577-residue polypeptide: Arginine--tRNA ligase (577 aa).

Positions 122-132 match the 'HIGH' region motif; the sequence is PNVAKEMHVGH.

This sequence belongs to the class-I aminoacyl-tRNA synthetase family. Monomer.

Its subcellular location is the cytoplasm. It carries out the reaction tRNA(Arg) + L-arginine + ATP = L-arginyl-tRNA(Arg) + AMP + diphosphate. The chain is Arginine--tRNA ligase from Salmonella schwarzengrund (strain CVM19633).